The following is a 145-amino-acid chain: Protein SprT-like (145 aa).

In terms of domain architecture, SprT-like spans 5–141 (DYVREVSLAD…CGRCHGRLIK (137 aa)). Histidine 64 lines the Zn(2+) pocket. Glutamate 65 is an active-site residue. Histidine 68 contributes to the Zn(2+) binding site.

Belongs to the SprT family. Zn(2+) is required as a cofactor.

Its subcellular location is the cytoplasm. The chain is Protein SprT-like from Streptococcus equi subsp. zooepidemicus (strain H70).